Consider the following 465-residue polypeptide: Mothers against decapentaplegic homolog 5 (465 aa).

An N-acetylthreonine modification is found at threonine 2. Positions 13-137 (PAVKRLLGWK…YKRVESPVLP (125 aa)) constitute an MH1 domain. Residues cysteine 65, cysteine 110, cysteine 122, and histidine 127 each contribute to the Zn(2+) site. A disordered region spans residues 163–249 (NEPHMPQNAT…PMDTSNNMIP (87 aa)). A compositionally biased stretch (polar residues) spans 169-182 (QNATFPDSFHQPNN). Residues 186 to 197 (PLSPNSPYPPSP) are compositionally biased toward pro residues. Low complexity predominate over residues 198-214 (ASSTYPNSPASSGPGSP). The span at 234 to 249 (GQDNSQPMDTSNNMIP) shows a compositional bias: polar residues. The MH2 domain maps to 271-465 (WCSIVYYELN…SPLNPISSVS (195 aa)). Serine 463 and serine 465 each carry phosphoserine.

The protein belongs to the dwarfin/SMAD family. As to quaternary structure, homodimer. Forms trimers with the co-SMAD SMAD4. Interacts with PEBP2-alpha subunit and SMURF1. Interacts with SUV39H1 and SUV39H2. Interacts (via MH2 domain) with LEMD3. Interacts with WWP1. Interacts with TMEM119. Interacts with ZNF8. Interacts with RANBP3L. Interacts with HK1. Interacts with HGS; this interaction attenuates BMP signaling. Post-translationally, phosphorylated on serine by BMP (bone morphogenetic proteins) type 1 receptor kinase. In terms of processing, ubiquitin-mediated proteolysis by SMAD-specific E3 ubiquitin ligase SMURF1. Ubiquitous.

The protein localises to the cytoplasm. It is found in the nucleus. It localises to the mitochondrion. In terms of biological role, transcriptional regulator that plays a role in various cellular processes including embryonic development, cell differentiation, angiogenesis and tissue homeostasis. Upon BMP ligand binding to their receptors at the cell surface, is phosphorylated by activated type I BMP receptors (BMPRIs) and associates with SMAD4 to form a heteromeric complex which translocates into the nucleus acting as transcription factor. In turn, the hetero-trimeric complex recognizes cis-regulatory elements containing Smad Binding Elements (SBEs) to modulate the outcome of the signaling network. Non-phosphorylated SMAD5 has a cytoplasmic role in energy metabolism regulation by promoting mitochondrial respiration and glycolysis in response to cytoplasmic pH changes. Mechanistically, interacts with hexokinase 1/HK1 and thereby accelerates glycolysis. The sequence is that of Mothers against decapentaplegic homolog 5 (SMAD5) from Homo sapiens (Human).